The sequence spans 20 residues: MTINFVFGFHIVTLSICQSF.

Belongs to the coronaviruses ns4.9 protein family.

The protein is Truncated non-structural protein of 4.9 kDa of Sus scrofa (Pig).